We begin with the raw amino-acid sequence, 583 residues long: Peptidyl-prolyl cis-trans isomerase FKBP10 (583 aa).

A signal peptide spans 1–27; that stretch reads MLRAGPPSHTLLRLPLLQLLLLLLVQA. PPIase FKBP-type domains follow at residues 63–151, 175–263, 287–375, and 400–487; these read GDFV…LDVW, SDFV…IDVH, GDFM…IDFH, and GDFV…VSRE. N-linked (GlcNAc...) asparagine glycans are attached at residues Asn71, Asn183, and Asn295. EF-hand domains lie at 498–533 and 543–578; these read WHED…QVSE and DPEK…DQDR. Residues Asp511, Asn513, Asp515, Glu517, Glu522, Asp556, Asn558, Asp560, Lys562, and Glu567 each coordinate Ca(2+). Residues 534 to 583 form a disordered region; sequence GKGRLLPGQDPEKTIGDMFQNQDRNQDGKITAEELKLKSDEDQDRVHEEL. Positions 557–583 are enriched in basic and acidic residues; that stretch reads RNQDGKITAEELKLKSDEDQDRVHEEL. Residues 580–583 carry the Prevents secretion from ER motif; sequence HEEL.

In terms of processing, glycosylated and phosphorylated.

The protein resides in the endoplasmic reticulum lumen. The catalysed reaction is [protein]-peptidylproline (omega=180) = [protein]-peptidylproline (omega=0). Inhibited by both FK506 and rapamycin, but not by cyclosporin A. Functionally, PPIases accelerate the folding of proteins during protein synthesis. The polypeptide is Peptidyl-prolyl cis-trans isomerase FKBP10 (FKBP10) (Bos taurus (Bovine)).